The sequence spans 1381 residues: Hepatocyte growth factor receptor (1381 aa).

A signal peptide spans 1 to 24 (MKAPTVLTPGILVLLFILVQRSNG). Topologically, residues 25–932 (ECKEALTKSE…VIVQPDQNFT (908 aa)) are extracellular. The 489-residue stretch at 27–515 (KEALTKSEMN…TGKKITKIPL (489 aa)) folds into the Sema domain. Asn45 carries an N-linked (GlcNAc...) asparagine glycan. Cystine bridges form between Cys95–Cys101, Cys98–Cys160, Cys133–Cys141, and Cys172–Cys175. Asn106 carries an N-linked (GlcNAc...) asparagine glycan. N-linked (GlcNAc...) asparagine glycosylation occurs at Asn149. Residue Asn202 is glycosylated (N-linked (GlcNAc...) asparagine). 2 cysteine pairs are disulfide-bonded: Cys298-Cys363 and Cys385-Cys397. Residue Asn399 is glycosylated (N-linked (GlcNAc...) asparagine). Cystine bridges form between Cys520–Cys538, Cys526–Cys561, Cys529–Cys545, and Cys541–Cys551. 3 consecutive IPT/TIG domains span residues 563–655 (PTIY…FSYV), 657–739 (PIIT…FSYR), and 742–836 (PIVY…LIYV). Thr582 is a glycosylation site (O-linked (Man) threonine). Asn607 and Asn635 each carry an N-linked (GlcNAc...) asparagine glycan. O-linked (Man) threonine glycosylation is found at Thr676 and Thr761. Residues Asn785, Asn879, and Asn930 are each glycosylated (N-linked (GlcNAc...) asparagine). A helical membrane pass occupies residues 933–955 (GLIAGVVSISIALLLLLGLFLWL). Over 956–1381 (KKRKQIKDLG…QDNADGEVDT (426 aa)) the chain is Cytoplasmic. Phosphoserine is present on Ser966. At Thr977 the chain carries Phosphothreonine. A phosphoserine mark is found at Ser990, Ser997, and Ser1000. Tyr1003 bears the Phosphotyrosine mark. In terms of domain architecture, Protein kinase spans 1078 to 1345 (VHFNEVIGRG…RISAIFSAFI (268 aa)). ATP-binding positions include 1084 to 1092 (IGRGHFGCV) and Lys1110. Asp1204 serves as the catalytic Proton acceptor. Residues 1212-1381 (LDEKFTVKVA…QDNADGEVDT (170 aa)) form an interaction with RANBP9 region. Tyr1230 bears the Phosphotyrosine mark. Tyr1234 and Tyr1235 each carry phosphotyrosine; by autocatalysis. Thr1289 is modified (phosphothreonine). The segment at 1320–1359 (WHPKAEMRPSFSELVSRISAIFSAFIGEHYVHVNATYVNV) is interaction with MUC20. A phosphotyrosine; by autocatalysis mark is found at Tyr1349 and Tyr1356. The residue at position 1365 (Tyr1365) is a Phosphotyrosine.

This sequence belongs to the protein kinase superfamily. Tyr protein kinase family. As to quaternary structure, heterodimer made of an alpha chain (50 kDa) and a beta chain (145 kDa) which are disulfide linked. Binds PLXNB1. Interacts when phosphorylated with downstream effectors including STAT3, PIK3R1, SRC, PCLG1, GRB2 and GAB1. Interacts with SPSB1, SPSB2 and SPSB4. Interacts with INPP5D/SHIP1. When phosphorylated at Tyr-1356, interacts with INPPL1/SHIP2. Interacts with RANBP9 and RANBP10, as well as SPSB1, SPSB2, SPSB3 and SPSB4. SPSB1 binding occurs in the presence and in the absence of HGF, however HGF treatment has a positive effect on this interaction. Interacts with MUC20; prevents interaction with GRB2 and suppresses hepatocyte growth factor-induced cell proliferation. Interacts with GRB10. Interacts with PTPN1 and PTPN2. Interacts with tensin TNS3. Interacts (when phosphorylated) with tensin TNS4 (via SH2 domain); the interaction increases MET protein stability by inhibiting MET endocytosis and subsequent lysosomal degradation. Autophosphorylated in response to ligand binding on Tyr-1234 and Tyr-1235 in the kinase domain leading to further phosphorylation of Tyr-1349 and Tyr-1356 in the C-terminal multifunctional docking site. Dephosphorylated by PTPRJ at Tyr-1349 and Tyr-1365. Dephosphorylated by PTPN1 and PTPN2. Post-translationally, ubiquitinated. Ubiquitination by CBL regulates the receptor stability and activity through proteasomal degradation. In terms of processing, O-mannosylation of IPT/TIG domains by TMEM260 is required for protein maturation. O-mannosylated residues are composed of single mannose glycans that are not elongated or modified.

It localises to the membrane. The catalysed reaction is L-tyrosyl-[protein] + ATP = O-phospho-L-tyrosyl-[protein] + ADP + H(+). In its inactive state, the C-terminal tail interacts with the catalytic domain and inhibits the kinase activity. Upon ligand binding, the C-terminal tail is displaced and becomes phosphorylated, thus increasing the kinase activity. In terms of biological role, receptor tyrosine kinase that transduces signals from the extracellular matrix into the cytoplasm by binding to hepatocyte growth factor/HGF ligand. Regulates many physiological processes including proliferation, scattering, morphogenesis and survival. Ligand binding at the cell surface induces autophosphorylation of MET on its intracellular domain that provides docking sites for downstream signaling molecules. Following activation by ligand, interacts with the PI3-kinase subunit PIK3R1, PLCG1, SRC, GRB2, STAT3 or the adapter GAB1. Recruitment of these downstream effectors by MET leads to the activation of several signaling cascades including the RAS-ERK, PI3 kinase-AKT, or PLCgamma-PKC. The RAS-ERK activation is associated with the morphogenetic effects while PI3K/AKT coordinates prosurvival effects. During embryonic development, MET signaling plays a role in gastrulation, development and migration of muscles and neuronal precursors, angiogenesis and kidney formation. In adults, participates in wound healing as well as organ regeneration and tissue remodeling. Also promotes differentiation and proliferation of hematopoietic cells. The chain is Hepatocyte growth factor receptor (MET) from Ateles geoffroyi (Black-handed spider monkey).